Consider the following 404-residue polypeptide: Probable RNA polymerase sigma-C factor (404 aa).

A Polymerase core binding motif is present at residues 193-206; it reads DLIQEGTLGLERAV. The H-T-H motif DNA-binding region spans 362 to 381; that stretch reads LSEIGRILNLSRERVRQIEA.

This sequence belongs to the sigma-70 factor family.

In terms of biological role, sigma factors are initiation factors that promote the attachment of RNA polymerase to specific initiation sites and are then released. This chain is Probable RNA polymerase sigma-C factor (sigC), found in Synechocystis sp. (strain ATCC 27184 / PCC 6803 / Kazusa).